Reading from the N-terminus, the 249-residue chain is Purine nucleoside phosphorylase ML0918 (249 aa).

Zn(2+)-binding residues include histidine 72, cysteine 109, and histidine 126.

The protein belongs to the purine nucleoside phosphorylase YfiH/LACC1 family. As to quaternary structure, homodimer. Cu(2+) is required as a cofactor. Zn(2+) serves as cofactor.

It carries out the reaction adenosine + phosphate = alpha-D-ribose 1-phosphate + adenine. The enzyme catalyses S-methyl-5'-thioadenosine + phosphate = 5-(methylsulfanyl)-alpha-D-ribose 1-phosphate + adenine. The catalysed reaction is inosine + phosphate = alpha-D-ribose 1-phosphate + hypoxanthine. It catalyses the reaction adenosine + H2O + H(+) = inosine + NH4(+). In terms of biological role, purine nucleoside enzyme that catalyzes the phosphorolysis of adenosine and inosine nucleosides, yielding D-ribose 1-phosphate and the respective free bases, adenine and hypoxanthine. Also catalyzes the phosphorolysis of S-methyl-5'-thioadenosine into adenine and S-methyl-5-thio-alpha-D-ribose 1-phosphate. Also has adenosine deaminase activity. The sequence is that of Purine nucleoside phosphorylase ML0918 from Mycobacterium leprae (strain TN).